The primary structure comprises 176 residues: Retinol-binding protein 4-B (176 aa).

Serine 1 carries the N-acetylserine modification. Cystine bridges form between cysteine 3/cysteine 159, cysteine 69/cysteine 173, and cysteine 119/cysteine 128. Substrate is bound at residue glutamine 97.

This sequence belongs to the calycin superfamily. Lipocalin family.

It localises to the secreted. RBP delivers retinol from the liver stores to the peripheral tissues. In plasma, the RBP-retinol complex interacts with transthyretin, this prevents its loss by filtration through the kidney glomeruli. The protein is Retinol-binding protein 4-B (rbp4b) of Oncorhynchus mykiss (Rainbow trout).